The sequence spans 110 residues: Protein C-ets-2 (110 aa).

Residues 1-84 constitute a DNA-binding region (ETS); sequence SGPIQLWQFL…AGKRYVYRFV (84 aa).

The protein belongs to the ETS family.

The protein resides in the nucleus. Its function is as follows. Probable transcription factor. This Lytechinus variegatus (Green sea urchin) protein is Protein C-ets-2 (ETS-2).